A 785-amino-acid chain; its full sequence is Endonuclease MutS2 (785 aa).

335-342 (GPNTGGKT) lines the ATP pocket. Residues 710–785 (LDLRGERYED…GNGVTIVEFK (76 aa)) enclose the Smr domain.

This sequence belongs to the DNA mismatch repair MutS family. MutS2 subfamily. In terms of assembly, homodimer. Binds to stalled ribosomes, contacting rRNA.

Endonuclease that is involved in the suppression of homologous recombination and thus may have a key role in the control of bacterial genetic diversity. In terms of biological role, acts as a ribosome collision sensor, splitting the ribosome into its 2 subunits. Detects stalled/collided 70S ribosomes which it binds and splits by an ATP-hydrolysis driven conformational change. Acts upstream of the ribosome quality control system (RQC), a ribosome-associated complex that mediates the extraction of incompletely synthesized nascent chains from stalled ribosomes and their subsequent degradation. Probably generates substrates for RQC. The polypeptide is Endonuclease MutS2 (Listeria monocytogenes serotype 4a (strain HCC23)).